Reading from the N-terminus, the 291-residue chain is B-lymphocyte antigen CD20 (291 aa).

The Cytoplasmic portion of the chain corresponds to 1-44; the sequence is MSGPFPAEPTKGPLAMQPAPKVNLKRTSSLVGPTQSFFMRESKA. The residue at position 29 (serine 29) is a Phosphoserine. The chain crosses the membrane as a helical span at residues 45–65; it reads LGAVQIMNGLFHITLGGLLMI. Topologically, residues 66–68 are extracellular; that stretch reads PTG. Residues 69-89 form a helical membrane-spanning segment; it reads VFAPICLSVWYPLWGGIMYII. Residues 90–111 are Cytoplasmic-facing; that stretch reads SGSLLAAAAEKTSRKSLVKAKV. Residues 112–132 traverse the membrane as a helical segment; sequence IMSSLSLFAAISGIILSIMDI. At 133 to 182 the chain is on the extracellular side; that stretch reads LNMTLSHFLKMRRLELIQTSKPYVDIYDCEPSNSSEKNSPSTQYCNSIQS. The helical transmembrane segment at 183-203 threads the bilayer; sequence VFLGILSAMLISAFFQKLVTA. The Cytoplasmic segment spans residues 204 to 291; sequence GIVENEWKRM…SLPVENEIAP (88 aa). Residue cysteine 214 is the site of S-palmitoyl cysteine attachment. Serine 219 is modified (phosphoserine). Residue threonine 233 is modified to Phosphothreonine. The segment covering 261 to 270 has biased composition (acidic residues); the sequence is VQEEEEEEAE. The tract at residues 261-291 is disordered; it reads VQEEEEEEAEINFPAPPQEQESLPVENEIAP.

The protein belongs to the MS4A family. In terms of assembly, forms homotetramers. Interacts with the heavy and light chains of cell surface IgM, the antigen-binding components of the BCR. In terms of processing, phosphorylated.

It is found in the cell membrane. In terms of biological role, B-lymphocyte-specific membrane protein that plays a role in the regulation of cellular calcium influx necessary for the development, differentiation, and activation of B-lymphocytes. Functions as a store-operated calcium (SOC) channel component promoting calcium influx after activation by the B-cell receptor/BCR. This Mus musculus (Mouse) protein is B-lymphocyte antigen CD20 (Ms4a1).